A 634-amino-acid polypeptide reads, in one-letter code: Ankyrin repeat protein OPG025 (634 aa).

ANK repeat units lie at residues 36–69, 70–100, 103–134, 175–211, 307–337, and 412–441; these read DGETPLKAYVTKKNNNIKNDVVILLLSSVDYKNI, NDFDIFEYLCSDNIDIDLLKLLISKGIEINS, NGINIVEKYATTSNPNVDVFKLLLDKGIPTCS, MGKTVLYYYIITRSQDGYATSLDVINYLISHKKEMRY, IQDLLLEYVSYHTVYINVIKCMIDEGATLYR, and HGCSILYHCIKSHSVSLVEWLIDNGADINI.

The protein belongs to the orthopoxvirus OPG025 family. In terms of assembly, interacts with components of host SCF complex CUL1 and SKP1 and components of the cullin deneddylation/COP9 signalosome complex subunits COPS7A and COPS7B.

Its function is as follows. Plays a role in the inhibition of host immune repsonse by counteracting the action of interferons on early events in the viral replication cycle. In Vaccinia virus (strain Western Reserve) (VACV), this protein is Ankyrin repeat protein OPG025 (OPG035).